A 475-amino-acid polypeptide reads, in one-letter code: Coronin-2B (475 aa).

5 WD repeats span residues 80 to 120 (GHQG…LKRN), 130 to 172 (GHSR…KMID), 174 to 212 (HTDV…VLQE), 215 to 258 (CKNH…MPVT), and 260 to 303 (EEID…PYLT). Residues 431–470 (NELLRMFFKQQEEIRRLKEQLSQRDLLVRQLELELKNLRN) adopt a coiled-coil conformation.

The protein belongs to the WD repeat coronin family.

Its subcellular location is the cytoplasm. The protein resides in the cytoskeleton. In terms of biological role, may play a role in the reorganization of neuronal actin structure. The sequence is that of Coronin-2B (coro2b) from Xenopus laevis (African clawed frog).